Reading from the N-terminus, the 196-residue chain is Thymidine kinase (196 aa).

Residues 9–16 (SAMNAGKS) and 88–91 (DEAQ) contribute to the ATP site. Glu89 functions as the Proton acceptor in the catalytic mechanism. Positions 146, 148, 183, and 186 each coordinate Zn(2+).

The protein belongs to the thymidine kinase family. Homotetramer.

Its subcellular location is the cytoplasm. It carries out the reaction thymidine + ATP = dTMP + ADP + H(+). The sequence is that of Thymidine kinase from Coxiella burnetii (strain RSA 493 / Nine Mile phase I).